The chain runs to 64 residues: Alpha-conotoxin-like Ai1.2 (64 aa).

Positions M1 to S17 are cleaved as a signal peptide. Residues T18–R43 constitute a propeptide that is removed on maturation. Disulfide bonds link C46/C52 and C47/C60. A ser-Xaa-Pro motif, crucial for potent interaction with nAChR region spans residues S48 to P50. The residue at position 61 (G61) is a Glycine amide.

The protein belongs to the conotoxin A superfamily. As to expression, expressed by the venom duct.

It localises to the secreted. Alpha-conotoxins act on postsynaptic membranes, they bind to the nicotinic acetylcholine receptors (nAChR) and thus inhibit them. The polypeptide is Alpha-conotoxin-like Ai1.2 (Conus ammiralis (Admiral cone)).